Here is a 521-residue protein sequence, read N- to C-terminus: Probable cytochrome P450 12d1 proximal, mitochondrial (521 aa).

A mitochondrion-targeting transit peptide spans 1 to 19 (MNTLSSARSVAIYVGPVRS). Residue cysteine 467 coordinates heme.

It belongs to the cytochrome P450 family. Requires heme as cofactor.

The protein localises to the mitochondrion membrane. This is Probable cytochrome P450 12d1 proximal, mitochondrial (Cyp12d1-p) from Drosophila melanogaster (Fruit fly).